The following is a 314-amino-acid chain: Olfactory receptor 5B3 (314 aa).

Topologically, residues 1 to 23 (MENKTEVTQFILLGLTNDSELQV) are extracellular. Residues Asn3 and Asn17 are each glycosylated (N-linked (GlcNAc...) asparagine). The helical transmembrane segment at 24-44 (PLFITFPFIYIITLVGNLGII) threads the bilayer. Over 45 to 52 (VLIFWDSC) the chain is Cytoplasmic. The chain crosses the membrane as a helical span at residues 53–73 (LHNPMYFFLSNLSLVDFCYSS). At 74–97 (AVTPIVMAGFLIEDKVISYNACAA) the chain is on the extracellular side. Cys95 and Cys187 form a disulfide bridge. Residues 98–118 (QMYIFVAFATVENYLLASMAY) traverse the membrane as a helical segment. Topologically, residues 119 to 131 (DRYAAVCKPLHYT) are cytoplasmic. Residues 132 to 152 (TTMTTTVCARLAIGSYLCGFL) traverse the membrane as a helical segment. The N-linked (GlcNAc...) asparagine glycan is linked to Asn153. Residues 153–194 (NASIHTGDTFSLSFCKSNEVHHFFCDIPAVMVLSCSDRHISE) are Extracellular-facing. The helical transmembrane segment at 195–215 (LVLIYVVSFNIFIALLVILIS) threads the bilayer. At 216-235 (YTFIFITILKMHSASVYQKP) the chain is on the cytoplasmic side. A helical membrane pass occupies residues 236–256 (LSTCASHFIAVGIFYGTIIFM). Topologically, residues 257 to 269 (YLQPSSSHSMDTD) are extracellular. The helical transmembrane segment at 270–290 (KMAPVFYTMVIPMLNPLVYSL) threads the bilayer. The Cytoplasmic segment spans residues 291-314 (RNKEVKSAFKKVVEKAKLSVGWSV).

The protein belongs to the G-protein coupled receptor 1 family.

The protein resides in the cell membrane. Functionally, odorant receptor. The protein is Olfactory receptor 5B3 (OR5B3) of Homo sapiens (Human).